The following is a 104-amino-acid chain: L-rhamnose mutarotase (104 aa).

Residue Tyr18 coordinates substrate. Catalysis depends on His22, which acts as the Proton donor. Substrate is bound by residues Tyr41 and 76-77 (WW).

The protein belongs to the rhamnose mutarotase family. As to quaternary structure, homodimer.

The protein localises to the cytoplasm. It carries out the reaction alpha-L-rhamnose = beta-L-rhamnose. It functions in the pathway carbohydrate metabolism; L-rhamnose metabolism. Its function is as follows. Involved in the anomeric conversion of L-rhamnose. This Listeria monocytogenes serotype 4b (strain F2365) protein is L-rhamnose mutarotase.